Here is a 355-residue protein sequence, read N- to C-terminus: Protein-glutamate methylesterase/protein-glutamine glutaminase 3 (355 aa).

Positions 8-126 (RVLVVDDSPT…AEELRRWGKE (119 aa)) constitute a Response regulatory domain. At D59 the chain carries 4-aspartylphosphate. Residues 152 to 337 (PPTGARVDIF…LASMPELILQ (186 aa)) form the CheB-type methylesterase domain. Residues S166, H193, and D284 contribute to the active site.

Belongs to the CheB family. Phosphorylated by CheA. Phosphorylation of the N-terminal regulatory domain activates the methylesterase activity.

It localises to the cytoplasm. It catalyses the reaction [protein]-L-glutamate 5-O-methyl ester + H2O = L-glutamyl-[protein] + methanol + H(+). The catalysed reaction is L-glutaminyl-[protein] + H2O = L-glutamyl-[protein] + NH4(+). Its function is as follows. Involved in chemotaxis. Part of a chemotaxis signal transduction system that modulates chemotaxis in response to various stimuli. Catalyzes the demethylation of specific methylglutamate residues introduced into the chemoreceptors (methyl-accepting chemotaxis proteins or MCP) by CheR. Also mediates the irreversible deamidation of specific glutamine residues to glutamic acid. The chain is Protein-glutamate methylesterase/protein-glutamine glutaminase 3 from Myxococcus xanthus (strain DK1622).